The chain runs to 333 residues: tRNA uridine(34) hydroxylase (333 aa).

Residues 123 to 217 (SDPEVILVDT…YLEEIKQEES (95 aa)) form the Rhodanese domain. The Cysteine persulfide intermediate role is filled by cysteine 177.

This sequence belongs to the TrhO family.

It carries out the reaction uridine(34) in tRNA + AH2 + O2 = 5-hydroxyuridine(34) in tRNA + A + H2O. Its function is as follows. Catalyzes oxygen-dependent 5-hydroxyuridine (ho5U) modification at position 34 in tRNAs. This Shewanella sp. (strain MR-7) protein is tRNA uridine(34) hydroxylase.